Consider the following 388-residue polypeptide: Nitric oxide reductase FlRd-NAD(+) reductase (388 aa).

The protein belongs to the FAD-dependent oxidoreductase family. FAD is required as a cofactor.

Its subcellular location is the cytoplasm. The catalysed reaction is 2 reduced [nitric oxide reductase rubredoxin domain] + NAD(+) + H(+) = 2 oxidized [nitric oxide reductase rubredoxin domain] + NADH. It functions in the pathway nitrogen metabolism; nitric oxide reduction. Functionally, one of at least two accessory proteins for anaerobic nitric oxide (NO) reductase. Reduces the rubredoxin moiety of NO reductase. The sequence is that of Nitric oxide reductase FlRd-NAD(+) reductase from Aeromonas hydrophila subsp. hydrophila (strain ATCC 7966 / DSM 30187 / BCRC 13018 / CCUG 14551 / JCM 1027 / KCTC 2358 / NCIMB 9240 / NCTC 8049).